Reading from the N-terminus, the 107-residue chain is Defensin-like protein 242 (107 aa).

Residues 1 to 22 form the signal peptide; it reads MKVVAIFLASCVLFSLIPTHLS. Disulfide bonds link Cys-45–Cys-100, Cys-55–Cys-84, Cys-65–Cys-94, and Cys-82–Cys-96.

This sequence belongs to the DEFL family.

It is found in the secreted. The sequence is that of Defensin-like protein 242 (SCRL10) from Arabidopsis thaliana (Mouse-ear cress).